The following is a 163-amino-acid chain: Biotin carboxyl carrier protein of acetyl-CoA carboxylase (163 aa).

Residues 85 to 161 (GDFIVSPLVG…QFGSKLFRIV (77 aa)) enclose the Biotinyl-binding domain. At Lys-127 the chain carries N6-biotinyllysine.

In terms of assembly, homodimer.

The protein operates within lipid metabolism; fatty acid biosynthesis. Functionally, this protein is a component of the acetyl coenzyme A carboxylase complex; first, biotin carboxylase catalyzes the carboxylation of the carrier protein and then the transcarboxylase transfers the carboxyl group to form malonyl-CoA. This chain is Biotin carboxyl carrier protein of acetyl-CoA carboxylase (accB), found in Chlamydia muridarum (strain MoPn / Nigg).